A 205-amino-acid polypeptide reads, in one-letter code: Macrophage immunometabolism regulator (205 aa).

The interval 1 to 40 (MEVDINGVNRTNNSVPSTAEGSSPSKPDPEKPRCSSTPCS) is disordered. Positions 8 to 25 (VNRTNNSVPSTAEGSSPS) are enriched in polar residues.

This sequence belongs to the UNC119-binding protein family. As to quaternary structure, interacts with unc119 family proteins; interaction preferentially takes place when unc119 proteins are unliganded with myristoylated proteins.

It localises to the cytoplasm. The protein localises to the cell projection. It is found in the cilium. Its function is as follows. May play a role in immune regulation through regulation of the macrophage function. May also play a role in trafficking of proteins via its interaction with unc119 family cargo adapters. May play a role in ciliary membrane localization. The sequence is that of Macrophage immunometabolism regulator (macir) from Xenopus laevis (African clawed frog).